Reading from the N-terminus, the 490-residue chain is Cyclin-T1-3 (490 aa).

Disordered stretches follow at residues 275–391 (RVAP…GDVA) and 414–490 (AAED…RLRS). Polar residues-rich tracts occupy residues 282–298 (QGND…NQRA) and 352–365 (TANS…SSTM). 2 stretches are compositionally biased toward basic and acidic residues: residues 367 to 391 (AMKK…GDVA) and 457 to 490 (QEYR…RLRS).

Belongs to the cyclin family. Cyclin T subfamily.

The protein is Cyclin-T1-3 (CYCT1-3) of Oryza sativa subsp. japonica (Rice).